A 94-amino-acid chain; its full sequence is Co-chaperonin GroES (94 aa).

It belongs to the GroES chaperonin family. As to quaternary structure, heptamer of 7 subunits arranged in a ring. Interacts with the chaperonin GroEL.

Its subcellular location is the cytoplasm. Functionally, together with the chaperonin GroEL, plays an essential role in assisting protein folding. The GroEL-GroES system forms a nano-cage that allows encapsulation of the non-native substrate proteins and provides a physical environment optimized to promote and accelerate protein folding. GroES binds to the apical surface of the GroEL ring, thereby capping the opening of the GroEL channel. In Lactobacillus acidophilus (strain ATCC 700396 / NCK56 / N2 / NCFM), this protein is Co-chaperonin GroES.